Here is a 376-residue protein sequence, read N- to C-terminus: Chaperone protein DnaJ (376 aa).

Positions 5 to 69 (DYYEILGVDR…EKRARYDRFG (65 aa)) constitute a J domain. The segment at 135–217 (GLETDIRVPH…CNGKGVVRKT (83 aa)) adopts a CR-type zinc-finger fold. Zn(2+) contacts are provided by C148, C151, C165, C168, C191, C194, C205, and C208. CXXCXGXG motif repeat units lie at residues 148 to 155 (CPVCHGSR), 165 to 172 (CQTCGGSG), 191 to 198 (CPDCQGEG), and 205 to 212 (CSNCNGKG).

This sequence belongs to the DnaJ family. In terms of assembly, homodimer. Requires Zn(2+) as cofactor.

It localises to the cytoplasm. Functionally, participates actively in the response to hyperosmotic and heat shock by preventing the aggregation of stress-denatured proteins and by disaggregating proteins, also in an autonomous, DnaK-independent fashion. Unfolded proteins bind initially to DnaJ; upon interaction with the DnaJ-bound protein, DnaK hydrolyzes its bound ATP, resulting in the formation of a stable complex. GrpE releases ADP from DnaK; ATP binding to DnaK triggers the release of the substrate protein, thus completing the reaction cycle. Several rounds of ATP-dependent interactions between DnaJ, DnaK and GrpE are required for fully efficient folding. Also involved, together with DnaK and GrpE, in the DNA replication of plasmids through activation of initiation proteins. This is Chaperone protein DnaJ from Methanothermobacter thermautotrophicus (strain ATCC 29096 / DSM 1053 / JCM 10044 / NBRC 100330 / Delta H) (Methanobacterium thermoautotrophicum).